Reading from the N-terminus, the 1501-residue chain is Neither inactivation nor afterpotential protein C (1501 aa).

Positions 16 to 282 (FEIYEEIAQG…MVEMVEHPFL (267 aa)) constitute a Protein kinase domain. Residues 22 to 30 (IAQGVNAKV) and K45 each bind ATP. D145 acts as the Proton acceptor in catalysis. S183 is modified (phosphoserine). In terms of domain architecture, Myosin motor spans 332-1037 (MYPEDLAALE…FLARLYELQV (706 aa)). The actin-binding stretch occupies residues 913 to 934 (LTLLKMLSQNANLGVHFVRCIR). 2 IQ domains span residues 1036–1065 (QVKKVIKVQSMMRALLARKRVKGGKVFKLG) and 1072–1101 (HDVAASKIQKAFRGFRDRVRLPPLVNEKSG). The interaction with rtp stretch occupies residues 1043 to 1271 (VQSMMRALLA…RMGESDNIYN (229 aa)). The non alpha-helical, C-terminal domain stretch occupies residues 1066 to 1501 (KKGPEHHDVA…ITLSGYAVDI (436 aa)). Disordered stretches follow at residues 1308–1364 (NWGV…DPVR) and 1390–1473 (KTNY…EDSN). Positions 1326–1335 (APPPPPPPMP) are enriched in pro residues. Low complexity predominate over residues 1336–1358 (SSNYYRNNPNQQQRNYQQRSSYP). The span at 1405-1414 (NNRRGSDSGD) shows a compositional bias: basic and acidic residues. Residues 1449–1463 (FGQQQRAPTLRQSPA) are compositionally biased toward polar residues.

This sequence in the C-terminal section; belongs to the TRAFAC class myosin-kinesin ATPase superfamily. Myosin family. In the N-terminal section; belongs to the protein kinase superfamily. Ser/Thr protein kinase family. Interacts with rtp. As to expression, expressed in the phototransducing compartment of photoreceptor cells, the rhabdomeres (at protein level).

It localises to the cytoplasm. It is found in the cytoskeleton. The protein resides in the nucleus. Its subcellular location is the membrane. The protein localises to the cell projection. It localises to the rhabdomere membrane. The catalysed reaction is L-seryl-[protein] + ATP = O-phospho-L-seryl-[protein] + ADP + H(+). It carries out the reaction L-threonyl-[protein] + ATP = O-phospho-L-threonyl-[protein] + ADP + H(+). In terms of biological role, required for photoreceptor cell function. The ninaC proteins combines putative serine/threonine-protein kinase and myosin activities. Essential for the expression and stability of the rtp protein in the photoreceptors. The rtp/ninaC complex is required for stability of inad and inac and the normal termination of phototransduction in the retina. This is Neither inactivation nor afterpotential protein C (ninaC) from Drosophila melanogaster (Fruit fly).